Consider the following 344-residue polypeptide: Probable magnesium transporter NIPA9 (344 aa).

At M1–K46 the chain is on the cytoplasmic side. 2 consecutive transmembrane segments (helical) span residues P47–S67 and L68–F88. At S89–N98 the chain is on the cytoplasmic side. Residues V99–G119 form a helical membrane-spanning segment. Over E120–S125 the chain is Extracellular. Residues L126–L146 traverse the membrane as a helical segment. Residues N147–E166 are Cytoplasmic-facing. A helical membrane pass occupies residues V167–V187. The Extracellular portion of the chain corresponds to S188–G191. The helical transmembrane segment at F192 to I212 threads the bilayer. Over C213–A231 the chain is Cytoplasmic. A helical transmembrane segment spans residues I232–F252. Residues A253–R265 lie on the Extracellular side of the membrane. The chain crosses the membrane as a helical span at residues L266–S286. Residues R287–D344 lie on the Cytoplasmic side of the membrane.

This sequence belongs to the NIPA (TC 2.A.7) family. In terms of assembly, homodimer.

It is found in the cell membrane. The protein resides in the early endosome. In terms of biological role, acts as a Mg(2+) transporter. Can also transport other divalent cations such as Fe(2+), Sr(2+), Ba(2+), Mn(2+) and Co(2+) but to a much less extent than Mg(2+). The polypeptide is Probable magnesium transporter NIPA9 (Arabidopsis thaliana (Mouse-ear cress)).